A 75-amino-acid polypeptide reads, in one-letter code: Metallothionein-like protein 1 (75 aa).

It belongs to the metallothionein superfamily. Type 15 family.

Functionally, metallothioneins have a high content of cysteine residues that bind various heavy metals. This chain is Metallothionein-like protein 1 (MTA), found in Pisum sativum (Garden pea).